A 377-amino-acid polypeptide reads, in one-letter code: Probable protein phosphatase 2C 61 (377 aa).

One can recognise a PPM-type phosphatase domain in the interval 30–338 (AAGEFSMAAA…DDITAVVVFL (309 aa)). 4 residues coordinate Mn(2+): aspartate 64, glycine 65, aspartate 269, and aspartate 329.

It belongs to the PP2C family. Requires Mg(2+) as cofactor. It depends on Mn(2+) as a cofactor.

It catalyses the reaction O-phospho-L-seryl-[protein] + H2O = L-seryl-[protein] + phosphate. It carries out the reaction O-phospho-L-threonyl-[protein] + H2O = L-threonyl-[protein] + phosphate. The polypeptide is Probable protein phosphatase 2C 61 (Oryza sativa subsp. japonica (Rice)).